The primary structure comprises 373 residues: Glutamine synthetase (373 aa).

Alanine 2 carries the N-acetylalanine modification. The interval alanine 2–lysine 25 is required for glutamine-induced ubiquitination by CRL4(CRBN) and proteasomal degradation. N6-acetyllysine is present on residues lysine 11 and lysine 14. The 83-residue stretch at glutamate 24–arginine 106 folds into the GS beta-grasp domain. Tyrosine 104 is modified (phosphotyrosine). Positions leucine 113 to asparagine 373 constitute a GS catalytic domain. An ATP-binding site is contributed by glutamate 134. Mn(2+) is bound by residues glutamate 134, glutamate 136, glutamate 196, and glutamate 203. Residue glutamate 203 to proline 208 coordinates ATP. Asparagine 246–tryptophan 247 is an L-glutamate binding site. Residue histidine 253 coordinates Mn(2+). ATP is bound by residues asparagine 255–serine 257, arginine 319, and arginine 324. L-glutamate is bound at residue arginine 319. Residue tyrosine 336–glutamate 338 participates in ADP binding. Glutamate 338 provides a ligand contact to Mn(2+). Arginine 340 contributes to the L-glutamate binding site. Phosphoserine is present on serine 343.

Belongs to the glutamine synthetase family. In terms of assembly, decamer; composed of two pentamers. Interacts with PALMD. Interacts with RHOJ. Interacts with BEST2; this interaction tethers a fraction of GLUL to the membrane, causing a decrease of cytosolic glutamine synthase (GS) activity and inhibits the chloride channel activity of BEST2 by affecting the gating at the aperture in the absence of intracellular glutamate. The cofactor is Mg(2+). It depends on Mn(2+) as a cofactor. Post-translationally, palmitoylated; undergoes autopalmitoylation. In terms of processing, acetylated by EP300/p300; acetylation is stimulated by increased glutamine levels and promotes ubiquitin-mediated proteasomal degradation. Ubiquitinated by ZNRF1. Ubiquitinated by the DCX (DDB1-CUL4-X-box) E3 ubiquitin-protein ligase complex called CRL4(CRBN), leading to proteasomal degradation.

The protein resides in the cytoplasm. It is found in the cytosol. Its subcellular location is the microsome. It localises to the mitochondrion. The protein localises to the cell membrane. The catalysed reaction is L-glutamate + NH4(+) + ATP = L-glutamine + ADP + phosphate + H(+). The enzyme catalyses L-cysteinyl-[protein] + hexadecanoyl-CoA = S-hexadecanoyl-L-cysteinyl-[protein] + CoA. Its activity is regulated as follows. Glutamine synthetase activity is inhibited by methionine sulfoximine (MSO). In terms of biological role, glutamine synthetase that catalyzes the ATP-dependent conversion of glutamate and ammonia to glutamine. Its role depends on tissue localization: in the brain, it regulates the levels of toxic ammonia and converts neurotoxic glutamate to harmless glutamine, whereas in the liver, it is one of the enzymes responsible for the removal of ammonia. Plays a key role in ammonium detoxification during erythropoiesis: the glutamine synthetase activity is required to remove ammonium generated by porphobilinogen deaminase (HMBS) during heme biosynthesis to prevent ammonium accumulation and oxidative stress. Essential for proliferation of fetal skin fibroblasts. Independently of its glutamine synthetase activity, required for endothelial cell migration during vascular development. Involved in angiogenesis by regulating membrane localization and activation of the GTPase RHOJ, possibly by promoting RHOJ palmitoylation. May act as a palmitoyltransferase for RHOJ: able to autopalmitoylate and then transfer the palmitoyl group to RHOJ. Plays a role in ribosomal 40S subunit biogenesis. Through the interaction with BEST2, inhibits BEST2 channel activity by affecting the gating at the aperture in the absence of intracellular L-glutamate, but sensitizes BEST2 to intracellular L-glutamate, which promotes the opening of BEST2 and thus relieves its inhibitory effect on BEST2. The chain is Glutamine synthetase from Canis lupus familiaris (Dog).